A 173-amino-acid chain; its full sequence is MKQSLTLVFLVAIGYATAHTTSHDYSGGYGGGCYGSDCDSGYGDSGYGGGCTGGDCGGGYGGGCSGGDCGNYGGGYGGDCNGGDCGNYGGGYGGGNGGGCSGGNCGGGFDEAFPAPYGGDYGNGGNGFGKGGSKGNNYGKGYGGGSGKGKGGGKGGKGGKGGTYKPSHYGGGY.

The first 18 residues, 1-18 (MKQSLTLVFLVAIGYATA), serve as a signal peptide directing secretion. Residues 145 to 162 (GSGKGKGGGKGGKGGKGG) are compositionally biased toward gly residues. Residues 145-173 (GSGKGKGGGKGGKGGKGGTYKPSHYGGGY) form a disordered region.

The protein is Eggshell protein of Schistosoma mansoni (Blood fluke).